Reading from the N-terminus, the 157-residue chain is Transcriptional repressor NrdR (157 aa).

A zinc finger spans residues 3–34; that stretch reads CPFCGHMESQVKDSRPSEDGAAIRRRRLCPEC. Residues 49–139 enclose the ATP-cone domain; that stretch reads LTIVKRSGRR…VYRDFRETSD (91 aa).

Belongs to the NrdR family. Zn(2+) serves as cofactor.

In terms of biological role, negatively regulates transcription of bacterial ribonucleotide reductase nrd genes and operons by binding to NrdR-boxes. This is Transcriptional repressor NrdR from Caulobacter sp. (strain K31).